We begin with the raw amino-acid sequence, 406 residues long: Arginine biosynthesis bifunctional protein ArgJ (406 aa).

Substrate is bound by residues threonine 156, lysine 182, threonine 193, glutamate 279, asparagine 401, and threonine 406. The active-site Nucleophile is threonine 193.

The protein belongs to the ArgJ family. As to quaternary structure, heterotetramer of two alpha and two beta chains.

It is found in the cytoplasm. It carries out the reaction N(2)-acetyl-L-ornithine + L-glutamate = N-acetyl-L-glutamate + L-ornithine. The catalysed reaction is L-glutamate + acetyl-CoA = N-acetyl-L-glutamate + CoA + H(+). It participates in amino-acid biosynthesis; L-arginine biosynthesis; L-ornithine and N-acetyl-L-glutamate from L-glutamate and N(2)-acetyl-L-ornithine (cyclic): step 1/1. Its pathway is amino-acid biosynthesis; L-arginine biosynthesis; N(2)-acetyl-L-ornithine from L-glutamate: step 1/4. Its function is as follows. Catalyzes two activities which are involved in the cyclic version of arginine biosynthesis: the synthesis of N-acetylglutamate from glutamate and acetyl-CoA as the acetyl donor, and of ornithine by transacetylation between N(2)-acetylornithine and glutamate. This is Arginine biosynthesis bifunctional protein ArgJ from Bacillus licheniformis (strain ATCC 14580 / DSM 13 / JCM 2505 / CCUG 7422 / NBRC 12200 / NCIMB 9375 / NCTC 10341 / NRRL NRS-1264 / Gibson 46).